We begin with the raw amino-acid sequence, 156 residues long: RING finger protein 224 (156 aa).

The RING-type zinc-finger motif lies at 24–71 (CIICCSAYDLSGHLPRRLYCGHTFCQACVRRLDTPAPEQRWIPCPQCR).

In Homo sapiens (Human), this protein is RING finger protein 224 (RNF224).